The following is a 141-amino-acid chain: Transmembrane protein 216 (141 aa).

A run of 4 helical transmembrane segments spans residues 15-35 (ILFF…LLIF), 49-69 (LVLD…RLFF), 82-102 (LGIS…YLLL), and 115-135 (SILL…LATF).

As to quaternary structure, part of the tectonic-like complex (also named B9 complex). Interacts with TMEM107.

It localises to the membrane. The protein resides in the cytoplasm. Its subcellular location is the cytoskeleton. It is found in the cilium basal body. Its function is as follows. Part of the tectonic-like complex which is required for tissue-specific ciliogenesis and may regulate ciliary membrane composition. This Rattus norvegicus (Rat) protein is Transmembrane protein 216 (Tmem216).